A 583-amino-acid polypeptide reads, in one-letter code: uncharacterized protein (583 aa).

Residues 162 to 424 (YGIFAAPILD…RGVQQNPFAK (263 aa)) enclose the FAD-binding FR-type domain.

This sequence belongs to the flavoprotein pyridine nucleotide cytochrome reductase family. FAD is required as a cofactor.

The protein localises to the mitochondrion. This is an uncharacterized protein from Schizosaccharomyces pombe (strain 972 / ATCC 24843) (Fission yeast).